The sequence spans 396 residues: RNA binding protein fox-1 homolog 1 (396 aa).

Residues 1 to 119 form a disordered region; it reads MNCEREQLRG…ESKSQPKRLH (119 aa). The segment covering 67–86 has biased composition (polar residues); sequence PPTQTHSEQSADTSAQTVSG. A compositionally biased stretch (low complexity) spans 87–98; sequence TATQTDDAAPTD. The segment covering 99–112 has biased composition (polar residues); the sequence is GQPQTQPSENTESK. One can recognise an RRM domain in the interval 116–192; sequence KRLHVSNIPF…RKIEVNNATA (77 aa). An asymmetric dimethylarginine mark is found at arginine 316 and alanine 337. The residue at position 387 (arginine 387) is an Omega-N-methylarginine.

As to quaternary structure, binds to the C-terminus of ATXN2. As to expression, detected in brain (at protein level). Detected in heart, brain, neurons, skeletal muscle and embryo.

The protein resides in the nucleus. The protein localises to the cytoplasm. RNA-binding protein that regulates alternative splicing events by binding to 5'-UGCAUGU-3' elements. Prevents binding of U2AF2 to the 3'-splice site. Regulates alternative splicing of tissue-specific exons and of differentially spliced exons during erythropoiesis. The chain is RNA binding protein fox-1 homolog 1 (Rbfox1) from Mus musculus (Mouse).